Reading from the N-terminus, the 315-residue chain is Acetyl-coenzyme A carboxylase carboxyl transferase subunit alpha (315 aa).

Positions 36–289 (LSKKRLELME…RKAVAAELKI (254 aa)) constitute a CoA carboxyltransferase C-terminal domain.

This sequence belongs to the AccA family. As to quaternary structure, acetyl-CoA carboxylase is a heterohexamer composed of biotin carboxyl carrier protein (AccB), biotin carboxylase (AccC) and two subunits each of ACCase subunit alpha (AccA) and ACCase subunit beta (AccD).

It is found in the cytoplasm. It carries out the reaction N(6)-carboxybiotinyl-L-lysyl-[protein] + acetyl-CoA = N(6)-biotinyl-L-lysyl-[protein] + malonyl-CoA. It participates in lipid metabolism; malonyl-CoA biosynthesis; malonyl-CoA from acetyl-CoA: step 1/1. In terms of biological role, component of the acetyl coenzyme A carboxylase (ACC) complex. First, biotin carboxylase catalyzes the carboxylation of biotin on its carrier protein (BCCP) and then the CO(2) group is transferred by the carboxyltransferase to acetyl-CoA to form malonyl-CoA. The protein is Acetyl-coenzyme A carboxylase carboxyl transferase subunit alpha of Francisella tularensis subsp. tularensis (strain FSC 198).